The primary structure comprises 68 residues: Pleurocidin (68 aa).

Positions 1–22 are cleaved as a signal peptide; sequence MKFTATFLMIAIFVLMVEPGEC. Positions 48–68 are excised as a propeptide; that stretch reads GDKQELNKRAVDEDPNVIVFE.

Belongs to the pleurocidin family. As to expression, goblet cells.

The protein localises to the secreted. Its function is as follows. Antimicrobial peptide with potent activity against Gram-positive and Gram-negative bacteria. Activity against E.coli and B.subtilis. Weaker activity against L.mucor, s.marcescens and P.aeruginosa. May play a role in innate host defense. The sequence is that of Pleurocidin (ple2) from Pseudopleuronectes americanus (Winter flounder).